The primary structure comprises 175 residues: CDP-archaeol synthase (175 aa).

The next 4 membrane-spanning stretches (helical) occupy residues 41–61 (GLFSGIFCGFLAGCIEIWLSM), 78–98 (YASALIVVLALPSGALFGDMF), 122–142 (FVVGAWFFTYLAAPEWFVSNF), and 150–170 (VLIMTPLLHLTTNIIGYFIGV).

The protein belongs to the CDP-archaeol synthase family. Requires Mg(2+) as cofactor.

Its subcellular location is the cell membrane. It catalyses the reaction 2,3-bis-O-(geranylgeranyl)-sn-glycerol 1-phosphate + CTP + H(+) = CDP-2,3-bis-O-(geranylgeranyl)-sn-glycerol + diphosphate. The protein operates within membrane lipid metabolism; glycerophospholipid metabolism. In terms of biological role, catalyzes the formation of CDP-2,3-bis-(O-geranylgeranyl)-sn-glycerol (CDP-archaeol) from 2,3-bis-(O-geranylgeranyl)-sn-glycerol 1-phosphate (DGGGP) and CTP. This reaction is the third ether-bond-formation step in the biosynthesis of archaeal membrane lipids. The chain is CDP-archaeol synthase from Methanosarcina acetivorans (strain ATCC 35395 / DSM 2834 / JCM 12185 / C2A).